Here is a 628-residue protein sequence, read N- to C-terminus: (+)-alpha pinene synthase 1, chloroplastic (628 aa).

The transit peptide at 1–18 directs the protein to the chloroplast; sequence MALVSAVPLNSKLCLCRT. Mg(2+) contacts are provided by aspartate 379, aspartate 383, and aspartate 531. Residues 379 to 383 carry the DDXXD motif motif; it reads DDIYD.

This sequence belongs to the terpene synthase family. Tpsd subfamily. Requires Mg(2+) as cofactor. Mn(2+) is required as a cofactor.

The protein localises to the plastid. It localises to the chloroplast. It carries out the reaction (2E)-geranyl diphosphate = (1R,5R)-alpha-pinene + diphosphate. Its pathway is terpene metabolism; oleoresin biosynthesis. It participates in secondary metabolite biosynthesis; terpenoid biosynthesis. In terms of biological role, monoterpene synthase (TPS) involved in the biosynthesis of monoterpene natural products included in conifer oleoresin secretions and volatile emissions; these compounds contribute to biotic and abiotic stress defense against herbivores and pathogens. Catalyzes the conversion of (2E)-geranyl diphosphate (GPP) to (+)-alpha-pinene. This chain is (+)-alpha pinene synthase 1, chloroplastic, found in Pinus banksiana (Jack pine).